A 202-amino-acid chain; its full sequence is Small ribosomal subunit protein uS4 (202 aa).

The tract at residues 16–43 (GELPGLSRKTPRRAYPPGQHGQGRRKRS) is disordered. Residues 90-152 (MRLDNTVFRL…DNSRRMVETN (63 aa)) form the S4 RNA-binding domain.

This sequence belongs to the universal ribosomal protein uS4 family. In terms of assembly, part of the 30S ribosomal subunit. Contacts protein S5. The interaction surface between S4 and S5 is involved in control of translational fidelity.

Functionally, one of the primary rRNA binding proteins, it binds directly to 16S rRNA where it nucleates assembly of the body of the 30S subunit. With S5 and S12 plays an important role in translational accuracy. In Crocosphaera subtropica (strain ATCC 51142 / BH68) (Cyanothece sp. (strain ATCC 51142)), this protein is Small ribosomal subunit protein uS4.